We begin with the raw amino-acid sequence, 71 residues long: Small ribosomal subunit protein bS21 (71 aa).

Residues 48-59 (AKASAVKRHAKK) are compositionally biased toward basic residues. The interval 48–71 (AKASAVKRHAKKLSRENARRIRLY) is disordered. Basic and acidic residues predominate over residues 60–71 (LSRENARRIRLY).

Belongs to the bacterial ribosomal protein bS21 family.

This chain is Small ribosomal subunit protein bS21, found in Aeromonas hydrophila subsp. hydrophila (strain ATCC 7966 / DSM 30187 / BCRC 13018 / CCUG 14551 / JCM 1027 / KCTC 2358 / NCIMB 9240 / NCTC 8049).